A 208-amino-acid chain; its full sequence is Thiamine-phosphate synthase (208 aa).

Residues 38–42 (QYRSK) and Asn-70 each bind 4-amino-2-methyl-5-(diphosphooxymethyl)pyrimidine. 2 residues coordinate Mg(2+): Asp-71 and Asp-90. Thr-109 is a binding site for 4-amino-2-methyl-5-(diphosphooxymethyl)pyrimidine. Residue 136–138 (SAT) participates in 2-[(2R,5Z)-2-carboxy-4-methylthiazol-5(2H)-ylidene]ethyl phosphate binding. Residue Lys-139 coordinates 4-amino-2-methyl-5-(diphosphooxymethyl)pyrimidine. Residues Gly-166 and 186–187 (VS) contribute to the 2-[(2R,5Z)-2-carboxy-4-methylthiazol-5(2H)-ylidene]ethyl phosphate site.

The protein belongs to the thiamine-phosphate synthase family. The cofactor is Mg(2+).

The enzyme catalyses 2-[(2R,5Z)-2-carboxy-4-methylthiazol-5(2H)-ylidene]ethyl phosphate + 4-amino-2-methyl-5-(diphosphooxymethyl)pyrimidine + 2 H(+) = thiamine phosphate + CO2 + diphosphate. It carries out the reaction 2-(2-carboxy-4-methylthiazol-5-yl)ethyl phosphate + 4-amino-2-methyl-5-(diphosphooxymethyl)pyrimidine + 2 H(+) = thiamine phosphate + CO2 + diphosphate. The catalysed reaction is 4-methyl-5-(2-phosphooxyethyl)-thiazole + 4-amino-2-methyl-5-(diphosphooxymethyl)pyrimidine + H(+) = thiamine phosphate + diphosphate. The protein operates within cofactor biosynthesis; thiamine diphosphate biosynthesis; thiamine phosphate from 4-amino-2-methyl-5-diphosphomethylpyrimidine and 4-methyl-5-(2-phosphoethyl)-thiazole: step 1/1. Its function is as follows. Condenses 4-methyl-5-(beta-hydroxyethyl)thiazole monophosphate (THZ-P) and 2-methyl-4-amino-5-hydroxymethyl pyrimidine pyrophosphate (HMP-PP) to form thiamine monophosphate (TMP). The polypeptide is Thiamine-phosphate synthase (Aromatoleum aromaticum (strain DSM 19018 / LMG 30748 / EbN1) (Azoarcus sp. (strain EbN1))).